A 221-amino-acid chain; its full sequence is UPF0502 protein CPS_0106 (221 aa).

The protein belongs to the UPF0502 family.

The protein is UPF0502 protein CPS_0106 of Colwellia psychrerythraea (strain 34H / ATCC BAA-681) (Vibrio psychroerythus).